The primary structure comprises 354 residues: Transcription factor HHO2 (354 aa).

Residues 93–102 (VQEEEEEDGE) show a composition bias toward acidic residues. A disordered region spans residues 93-112 (VQEEEEEDGEHESSPELVNN). The segment covering 103–112 (HESSPELVNN) has biased composition (basic and acidic residues). The region spanning 212-272 (THRKQRRCWS…HLQKYRLHTR (61 aa)) is the HTH myb-type domain. Residues 243-268 (PKQIRDHMKVDGLTNDEVKSHLQKYR) constitute a DNA-binding region (H-T-H motif). The segment at 324–354 (VAQSPKRSLERSCNSPAASSSTNTNTSTPVS) is disordered. Over residues 337 to 354 (NSPAASSSTNTNTSTPVS) the composition is skewed to low complexity.

The protein resides in the nucleus. Functionally, probable transcription factor involved in phosphate homeostasis. Involved in the regulation of the developmental response of lateral roots, acquisition and/or mobilization of phosphate and expression of a subset of genes involved in phosphate sensing and signaling pathway. Is a target of the transcription factor PHR1. The protein is Transcription factor HHO2 of Arabidopsis thaliana (Mouse-ear cress).